The following is a 761-amino-acid chain: Cytoplasmic export protein 1 (761 aa).

HEAT repeat units lie at residues 385–423 (IYPH…LNNE) and 498–534 (NTIA…LEKL). Disordered stretches follow at residues 660-692 (DDGW…IAPS) and 714-761 (STVT…DTNW). 2 stretches are compositionally biased toward polar residues: residues 680-692 (PQNS…IAPS) and 714-737 (STVT…SIRG). Positions 747–761 (GWDDDGDSDSWDTNW) are enriched in acidic residues. A Phosphoserine modification is found at S754.

In terms of assembly, associates with the nuclear pore complex (NPC). Interacts with GSP1, LOS1, MSN5, NUP116 and TEF2.

Its subcellular location is the cytoplasm. In terms of biological role, component of the nuclear tRNA export machinery that my collect tRNA from the nuclear tRNA export receptors of the aminoacylation-dependent export and may deliver aminoacylated tRNAs to the translation machinery pathway at the nuclear pore complex. The protein is Cytoplasmic export protein 1 (CEX1) of Saccharomyces cerevisiae (strain ATCC 204508 / S288c) (Baker's yeast).